Consider the following 324-residue polypeptide: D-alanine--D-alanine ligase (324 aa).

Residues 120–322 (NNYLRGFGVE…LKEILTEIIE (203 aa)) enclose the ATP-grasp domain. 149 to 204 (IDKLGLPLIVKPNDGGSSFGVTKVTNITQIQLAIRNAFNEGEGVLIESFIPGTEIT) is an ATP binding site. Aspartate 276, glutamate 289, and asparagine 291 together coordinate Mg(2+).

Belongs to the D-alanine--D-alanine ligase family. It depends on Mg(2+) as a cofactor. Mn(2+) is required as a cofactor.

The protein resides in the cytoplasm. It carries out the reaction 2 D-alanine + ATP = D-alanyl-D-alanine + ADP + phosphate + H(+). Its pathway is cell wall biogenesis; peptidoglycan biosynthesis. Functionally, cell wall formation. This Azobacteroides pseudotrichonymphae genomovar. CFP2 protein is D-alanine--D-alanine ligase.